The following is a 147-amino-acid chain: Large ribosomal subunit protein uL13 (147 aa).

Positions 126–147 (AGPTHPHQAQQPVPYEIKQVAQ) are disordered.

It belongs to the universal ribosomal protein uL13 family. In terms of assembly, part of the 50S ribosomal subunit.

Functionally, this protein is one of the early assembly proteins of the 50S ribosomal subunit, although it is not seen to bind rRNA by itself. It is important during the early stages of 50S assembly. In Parafrankia sp. (strain EAN1pec), this protein is Large ribosomal subunit protein uL13.